The primary structure comprises 492 residues: T-box transcription factor TBX5-A (492 aa).

Residues 1-43 are disordered; sequence MADSEDTFRLQNSPSDSEPKDLQNEGKSDKQNAAVSKSPSSQT. The segment covering 17 to 30 has biased composition (basic and acidic residues); that stretch reads SEPKDLQNEGKSDK. The segment covering 31–43 has biased composition (polar residues); that stretch reads QNAAVSKSPSSQT. The segment at residues 62–237 is a DNA-binding region (T-box); sequence LWTKFHEVGT…NNPFAKGFRG (176 aa). The tract at residues 331-352 is disordered; it reads AGEHPYKKPYVESSSSEDDHYY.

As to quaternary structure, monomer. Homodimer (via the T-box); binds DNA as homodimer. As to expression, expressed in the dorsal optic cup of developing eye, pectoral fin buds and heart. At 31 hpf, when the pectoral fin buds have begun bulging outwards, restricted expression is detected throughout the mesenchyme of the early fin buds and these high levels of expression continue until later stages.

It is found in the nucleus. The protein localises to the cytoplasm. In terms of biological role, required for pectoral fin formation. Together with tbx5b, involved in eye and heart development. Required for the looping stage of heart development. May bind to the core DNA motif of promoters. The sequence is that of T-box transcription factor TBX5-A (tbx5a) from Danio rerio (Zebrafish).